A 205-amino-acid polypeptide reads, in one-letter code: MSEEVKNSVETEENKASKDNATQAPNPTENHNTAQETEKAENSEKTESATQENESLDKLKKDVTNYREQLLRTVADFENLKKQKEREVASVRKFADESLIKELLPVLDDIERVLVNASKFLQASPEAQSYVDGVKLIQQNMMKVFEARGLKRIEAVGTPFDVHLHEALSQMEKEGAEPDTVIQEFAPGYTLNDKVVRHSKVIVSK.

The span at 1-18 (MSEEVKNSVETEENKASK) shows a compositional bias: basic and acidic residues. The tract at residues 1-60 (MSEEVKNSVETEENKASKDNATQAPNPTENHNTAQETEKAENSEKTESATQENESLDKLK) is disordered. Over residues 19-35 (DNATQAPNPTENHNTAQ) the composition is skewed to polar residues. Positions 36 to 47 (ETEKAENSEKTE) are enriched in basic and acidic residues.

The protein belongs to the GrpE family. In terms of assembly, homodimer.

The protein resides in the cytoplasm. Functionally, participates actively in the response to hyperosmotic and heat shock by preventing the aggregation of stress-denatured proteins, in association with DnaK and GrpE. It is the nucleotide exchange factor for DnaK and may function as a thermosensor. Unfolded proteins bind initially to DnaJ; upon interaction with the DnaJ-bound protein, DnaK hydrolyzes its bound ATP, resulting in the formation of a stable complex. GrpE releases ADP from DnaK; ATP binding to DnaK triggers the release of the substrate protein, thus completing the reaction cycle. Several rounds of ATP-dependent interactions between DnaJ, DnaK and GrpE are required for fully efficient folding. The protein is Protein GrpE of Chloroherpeton thalassium (strain ATCC 35110 / GB-78).